The following is a 377-amino-acid chain: uncharacterized protein (377 aa).

Composition is skewed to polar residues over residues 1-11 (MSSIQGTSGSS) and 31-43 (PSGQ…AVGK). 3 disordered regions span residues 1–43 (MSSI…AVGK), 109–141 (SSEE…IARN), and 328–377 (SSSP…RGFQ). Residues 334 to 345 (EDPRSLRDRLRD) are compositionally biased toward basic and acidic residues.

It belongs to the chlamydial CPn_0499/CT_392/TC_0671 family.

This is an uncharacterized protein from Chlamydia trachomatis serovar D (strain ATCC VR-885 / DSM 19411 / UW-3/Cx).